The primary structure comprises 245 residues: Probable metal transport system ATP-binding protein CPn_0542/CP_0210/CPj0542/CpB0563 (245 aa).

The region spanning 5 to 240 (ILAEGLAFRY…CCHPYKNQEF (236 aa)) is the ABC transporter domain. 39-46 (GPNGGGKS) contributes to the ATP binding site.

The protein belongs to the ABC transporter superfamily.

It is found in the cell inner membrane. Part of an ATP-driven transport system CPn0541/CPn0542/CPn0543 for a metal. Probably responsible for energy coupling to the transport system. This Chlamydia pneumoniae (Chlamydophila pneumoniae) protein is Probable metal transport system ATP-binding protein CPn_0542/CP_0210/CPj0542/CpB0563.